A 453-amino-acid chain; its full sequence is Carbamoyl phosphate synthase arginine-specific small chain (453 aa).

Residues 1–28 constitute a mitochondrion transit peptide; the sequence is MFARVFKAMPARASALTSVNASIPARFM. A Glutamine amidotransferase type-1 domain is found at 219 to 406; that stretch reads HVAVIDCGVK…IDSVKKYKAS (188 aa). Cysteine 295 (nucleophile) is an active-site residue. Residues histidine 379 and glutamate 381 contribute to the active site.

Belongs to the CarA family. Heterodimer composed of 2 chains; the small (or glutamine) chain promotes the hydrolysis of glutamine to ammonia, which is used by the large (or ammonia) chain to synthesize carbamoyl phosphate.

It localises to the mitochondrion matrix. The catalysed reaction is hydrogencarbonate + L-glutamine + 2 ATP + H2O = carbamoyl phosphate + L-glutamate + 2 ADP + phosphate + 2 H(+). It catalyses the reaction L-glutamine + H2O = L-glutamate + NH4(+). Its pathway is amino-acid biosynthesis; L-arginine biosynthesis; carbamoyl phosphate from bicarbonate: step 1/1. Functionally, small subunit of the arginine-specific carbamoyl phosphate synthase (CPSase). CPSase catalyzes the formation of carbamoyl phosphate from the ammonia moiety of glutamine, carbonate, and phosphate donated by ATP, the first step of the arginine biosynthetic pathway. The small subunit (glutamine amidotransferase) binds and cleaves glutamine to supply the large subunit with the substrate ammonia. The chain is Carbamoyl phosphate synthase arginine-specific small chain (cpa1) from Aspergillus fumigatus (strain ATCC MYA-4609 / CBS 101355 / FGSC A1100 / Af293) (Neosartorya fumigata).